We begin with the raw amino-acid sequence, 159 residues long: 17 kDa surface antigen (159 aa).

Residues 1 to 19 form the signal peptide; it reads MKLLSKIMIIALAASMLQA. Cys-20 is lipidated: N-palmitoyl cysteine. Residue Cys-20 is the site of S-diacylglycerol cysteine attachment.

It belongs to the rickettsiale 17 kDa surface antigen family.

It localises to the cell outer membrane. In Rickettsia prowazekii (strain Madrid E), this protein is 17 kDa surface antigen (omp).